Reading from the N-terminus, the 228-residue chain is DNA repair protein RecO (228 aa).

It belongs to the RecO family.

Its function is as follows. Involved in DNA repair and RecF pathway recombination. The sequence is that of DNA repair protein RecO from Mannheimia succiniciproducens (strain KCTC 0769BP / MBEL55E).